The sequence spans 173 residues: Shikimate kinase 1 (173 aa).

14-19 (GAGKST) serves as a coordination point for ATP. Serine 18 contacts Mg(2+). Residues aspartate 36, arginine 60, and glycine 82 each coordinate substrate. Arginine 120 provides a ligand contact to ATP. Position 140 (arginine 140) interacts with substrate. Glutamine 157 contacts ATP.

It belongs to the shikimate kinase family. As to quaternary structure, monomer. Mg(2+) serves as cofactor.

It localises to the cytoplasm. The catalysed reaction is shikimate + ATP = 3-phosphoshikimate + ADP + H(+). Its pathway is metabolic intermediate biosynthesis; chorismate biosynthesis; chorismate from D-erythrose 4-phosphate and phosphoenolpyruvate: step 5/7. Its function is as follows. Catalyzes the specific phosphorylation of the 3-hydroxyl group of shikimic acid using ATP as a cosubstrate. This is Shikimate kinase 1 from Sodalis glossinidius (strain morsitans).